The sequence spans 710 residues: DNA topoisomerase 1 (710 aa).

The segment at 1 to 22 (MPTSTKSKTKTTTKKKTTRKRV) is disordered. The segment covering 7–22 (SKTKTTTKKKTTRKRV) has biased composition (basic residues). The Toprim domain occupies 26–136 (KNLVIVESPA…EKNRVVFNEI (111 aa)). The Mg(2+) site is built by glutamate 32 and aspartate 105. Residues 152 to 574 (DVDLVDAQQA…QFYKPFAKEL (423 aa)) form the Topo IA-type catalytic domain. An interaction with DNA region spans residues 186 to 191 (SAGRVQ). Tyrosine 321 functions as the O-(5'-phospho-DNA)-tyrosine intermediate in the catalytic mechanism. C4-type zinc fingers lie at residues 595-621 (CDVC…FPDC) and 635-663 (CPLC…YPDC). The segment at 676–702 (CPKSGHFLVEKKVRGGGKQVVCSNDEC) adopts a C4-type 3; atypical zinc-finger fold.

Belongs to the type IA topoisomerase family. In terms of assembly, monomer. It depends on Mg(2+) as a cofactor.

The enzyme catalyses ATP-independent breakage of single-stranded DNA, followed by passage and rejoining.. Its function is as follows. Releases the supercoiling and torsional tension of DNA, which is introduced during the DNA replication and transcription, by transiently cleaving and rejoining one strand of the DNA duplex. Introduces a single-strand break via transesterification at a target site in duplex DNA. The scissile phosphodiester is attacked by the catalytic tyrosine of the enzyme, resulting in the formation of a DNA-(5'-phosphotyrosyl)-enzyme intermediate and the expulsion of a 3'-OH DNA strand. The free DNA strand then undergoes passage around the unbroken strand, thus removing DNA supercoils. Finally, in the religation step, the DNA 3'-OH attacks the covalent intermediate to expel the active-site tyrosine and restore the DNA phosphodiester backbone. This Lactococcus lactis subsp. lactis (strain IL1403) (Streptococcus lactis) protein is DNA topoisomerase 1.